The primary structure comprises 126 residues: Fatty acid-binding protein 10-A, liver basic (126 aa).

Lysine 57, lysine 77, histidine 99, and glutamine 101 together coordinate cholate.

Belongs to the calycin superfamily. Fatty-acid binding protein (FABP) family. In terms of tissue distribution, expressed in the developing embryonic liver from 48 hpf. Also expressed in the liver of 5-day-old larvae. In adults, primarily expressed in the liver, with weak expression in the testis and intestine.

It is found in the cytoplasm. Binds hydrophobic ligands, such as cholate, in the cytoplasm. May be involved in intracellular lipid transport. Binds one cholate per subunit. The protein is Fatty acid-binding protein 10-A, liver basic (fabp10a) of Danio rerio (Zebrafish).